A 624-amino-acid chain; its full sequence is Ubiquitin carboxyl-terminal hydrolase 16 (624 aa).

In terms of domain architecture, USP spans 46–620 (VGLSNPANDC…EVYLLFYEIE (575 aa)). The Nucleophile role is filled by cysteine 55. Histidine 424 acts as the Proton acceptor in catalysis. Residues 453 to 573 (SENPSRVASP…ATDTEASASA (121 aa)) are disordered. A compositionally biased stretch (low complexity) spans 479 to 496 (SPPASTSTNSPLSLTPDS). Polar residues predominate over residues 518–544 (VSFQSTHSSSKQTISPTSAARNSSSLD). Over residues 546-573 (ARLSSPASRSSLAERNASATDTEASASA) the composition is skewed to low complexity.

This sequence belongs to the peptidase C19 family.

It carries out the reaction Thiol-dependent hydrolysis of ester, thioester, amide, peptide and isopeptide bonds formed by the C-terminal Gly of ubiquitin (a 76-residue protein attached to proteins as an intracellular targeting signal).. The polypeptide is Ubiquitin carboxyl-terminal hydrolase 16 (ubp16) (Emericella nidulans (strain FGSC A4 / ATCC 38163 / CBS 112.46 / NRRL 194 / M139) (Aspergillus nidulans)).